The following is a 130-amino-acid chain: Holo-[acyl-carrier-protein] synthase (130 aa).

Positions 9 and 58 each coordinate Mg(2+).

It belongs to the P-Pant transferase superfamily. AcpS family. It depends on Mg(2+) as a cofactor.

Its subcellular location is the cytoplasm. The enzyme catalyses apo-[ACP] + CoA = holo-[ACP] + adenosine 3',5'-bisphosphate + H(+). Transfers the 4'-phosphopantetheine moiety from coenzyme A to a Ser of acyl-carrier-protein. This chain is Holo-[acyl-carrier-protein] synthase, found in Mycobacterium bovis (strain ATCC BAA-935 / AF2122/97).